Consider the following 513-residue polypeptide: MEISWGRALWRNFLGQSPDWYKLALIIFLIVNPLIFLISPFVAGWLLVAEFIFTLAMALKCYPLLPGGLLAIEAVFIGMTSAEHVREEVAANLEVLLLLMFMVAGIYFMKQLLLFIFTRLLLSIRSKMLLSLSFCVAAAFLSAFLDALTVVAVVISVAVGFYGIYHRVASSRTEDTDLQDDSHIDKHYKVVLEQFRGFLRSLMMHAGVGTALGGVMTMVGEPQNLIIAKAAGWHFGDFFLRMSPVTVPVLICGLLTCLLVEKLRWFGYGETLPEKVREVLQQFDDQSRHQRTRQDKIRLIVQAIIGVWLVTALALHLAEVGLIGLSVIILATSLTGVTDEHAIGKAFTESLPFTALLTVFFSVVAVIIDQQLFSPIIQFVLQASEHAQLSLFYIFNGLLSSISDNVFVGTIYINEAKAAMESGAITLKQYELLAVAINTGTNLPSVATPNGQAAFLFLLTSALAPLIRLSYGRMVWMALPYTLVLTLVGLLCVEFTLAPVTEWFMQMGWIATL.

12 helical membrane-spanning segments follow: residues 23–43 (LALI…PFVA), 52–72 (IFTL…LLAI), 97–117 (LLLM…LFIF), 120–140 (LLLS…AAAF), 144–164 (FLDA…FYGI), 202–222 (LMMH…VGEP), 238–258 (FFLR…LTCL), 303–323 (AIIG…VGLI), 348–368 (TESL…AVII), 391–411 (LFYI…VGTI), 447–467 (ATPN…APLI), and 475–495 (VWMA…CVEF).

It belongs to the NhaB Na(+)/H(+) (TC 2.A.34) antiporter family.

It is found in the cell inner membrane. The catalysed reaction is 2 Na(+)(in) + 3 H(+)(out) = 2 Na(+)(out) + 3 H(+)(in). In terms of biological role, na(+)/H(+) antiporter that extrudes sodium in exchange for external protons. In Shigella boydii serotype 18 (strain CDC 3083-94 / BS512), this protein is Na(+)/H(+) antiporter NhaB.